The chain runs to 1067 residues: MDAQFTLELTQLLFQSIAPDTTQITEATRALETKYLKEPGSLLSLFHIMGTCENPQVRQLAAIEARKLCHKYWSSVDADVQNQIRSNLLDITLKEPESIVRHAFGRVIAALAKLDLPEGKWNELSAFLVQATMDQNDSIREMAVYVLYSIAETVDLDNKLLLDFVNLFSQTITDSSRTVRVTSVQGLGAIAEVLESDDKKLLHAYRATLPGMLLVLQDVVQVGDVDASKQVFDVFNTFLIASGAIISKALGNIIEIITGIANSKQVDDEIRCMALSFIISCIRFKSRKLQALKLGKPLVLTLMEVATEETTDDIDEDCPARLALRSIDLLSTHLSPSQVFYPMFEAACAFSQSPQASYRKAALLSIGVAVEGSSESVAGNLPNIFPIIINGLCDNDMDVRQAALLALSQIAVEIPTEVSKHHAQLLPLVFELMSTQGVKVGKSACNCIDALLEGLDKSEISGYLPMLMERLVGLLEFSDTPDIKSCVAAAIGSAAFAAQDDFIPYFERTMASLSQCLHTTDDDEGYELRGTVMDTLGAIANAVGKQAFLPYTEQLIQLAYEGIQIDHSRLRECSFCFYAVLARVYKEEFAPFLEHIVPALFKSIDQDESDILSERIGAPTAEEISQLLDSVETNEEENDEELEKAMGVNSAIAMEKEIAADALGEICMYVGAPFTPYLEPTVEKLVACTTHFYEGVRKSALSSLWRCATTYYKVCNVPQWQPGLPLKVPVPDTVKNIFEAVRKCTFDTLEEEYEKTVATDILRNFAESIKTCGPVVLGDDYEKLCEVVMEVLQKQHIVQAGDVFDDDFEEEDIVSNEEVDDTEQDALLIDSACDVVIALAVALGGSFADSFKVFYPQIVKYYMSKNGNERAMAVACVGEVAGGIESAITPFTRDVFSLFMAALEDSEGEVRSNAAYSMGLLCQFSTEDLSSEYLNILQKLQPFFTQEVFRTALDNAIGCISRLILHNQNAIPVDQVLPIVFSKLPLKEDYLENAPLYHMILALYRQQNPCLVQHLGELIPVFASVLTGSPEQLNDELRSELLSMVKEIAPQYESVVSNYPQLVALLQ.

The Importin N-terminal domain maps to 27-94; it reads ATRALETKYL…RSNLLDITLK (68 aa). HEAT repeat units lie at residues 159–196, 379–416, 420–457, 591–633, 890–927, and 1013–1050; these read KLLL…VLES, GNLP…EIPT, KHHA…GLDK, PFLE…SVET, PFTR…FSTE, and QHLG…EIAP.

It belongs to the importin beta family.

The protein localises to the cytoplasm. Its subcellular location is the nucleus. It localises to the nucleus envelope. Required for nuclear protein import, its predominant substrate seems to be ribosomal proteins. Binds to nucleoporins and the GTP-bound form of gsp1 (Ran). The polypeptide is Probable importin subunit beta-4 (kap123) (Schizosaccharomyces pombe (strain 972 / ATCC 24843) (Fission yeast)).